We begin with the raw amino-acid sequence, 614 residues long: MTTLDSNNNTGGVITYIGSSGSSPSRTSPESLYSDNSNGSFQSLTQGCPTYFPPSPTGSLTQDPARSFGSIPPSLSDDGSPSSSSSSSSSSSSFYNGSPPGSLQVAMEDSSRVSPSKSTSNITKLNGMVLLCKVCGDVASGFHYGVHACEGCKGFFRRSIQQNIQYKRCLKNENCSIVRINRNRCQQCRFKKCLSVGMSRDAVRFGRIPKREKQRMLAEMQSAMNLANNQLSSQCPLETSPTQHPTPGPMGPSPPPAPVPSPLVGFSQFPQQLTPPRSPSPEPTVEDVISQVARAHREIFTYAHDKLGSSPGNFNANHASGSPPATTPHRWENQGCPPAPNDNNTLAAQRHNEALNGLRQAPSSYPPTWPPGPAHHSCHQSNSNGHRLCPTHVYAAPEGKAPANSPRQGNSKNVLLACPMNMYPHGRSGRTVQEIWEDFSMSFTPAVREVVEFAKHIPGFRDLSQHDQVTLLKAGTFEVLMVRFASLFNVKDQTVMFLSRTTYSLQELGAMGMGDLLSAMFDFSEKLNSLALTEEELGLFTAVVLVSADRSGMENSASVEQLQETLLRALRALVLKNRPLETSRFTKLLLKLPDLRTLNNMHSEKLLSFRVDAQ.

The span at 1–12 (MTTLDSNNNTGG) shows a compositional bias: polar residues. Residues 1-70 (MTTLDSNNNT…TQDPARSFGS (70 aa)) form a required for phosphorylation by CSNK1E and cytoplasmic localization region. Residues 1–119 (MTTLDSNNNT…SSRVSPSKST (119 aa)) form a disordered region. The segment at 1–128 (MTTLDSNNNT…TSNITKLNGM (128 aa)) is modulating. The span at 14-34 (ITYIGSSGSSPSRTSPESLYS) shows a compositional bias: low complexity. Over residues 35 to 48 (DNSNGSFQSLTQGC) the composition is skewed to polar residues. The crucial for activation of GJA1 stretch occupies residues 49-284 (PTYFPPSPTG…PPRSPSPEPT (236 aa)). Phosphoserine; by GSK3-beta is present on residues S55 and S59. Residues 69–102 (GSIPPSLSDDGSPSSSSSSSSSSSSFYNGSPPGS) show a composition bias toward low complexity. A DNA-binding region (nuclear receptor) is located at residues 129–205 (VLLCKVCGDV…VGMSRDAVRF (77 aa)). 2 consecutive NR C4-type zinc fingers follow at residues 132–152 (CKVC…CEGC) and 169–193 (CLKN…FKKC). N6-acetyllysine; by KAT5 is present on residues K191 and K192. Over residues 233–243 (SQCPLETSPTQ) the composition is skewed to polar residues. Disordered stretches follow at residues 233-285 (SQCP…EPTV) and 311-345 (PGNF…DNNT). Positions 244–261 (HPTPGPMGPSPPPAPVPS) are enriched in pro residues. Position 274 is a phosphothreonine; by CDK1 (T274). An NR LBD domain is found at 284–614 (TVEDVISQVA…KLLSFRVDAQ (331 aa)). Polar residues predominate over residues 311-324 (PGNFNANHASGSPP). Position 400 is an N6-acetyllysine (K400). Heme is bound at residue C418. N6-acetyllysine is present on K591. H602 contacts heme.

This sequence belongs to the nuclear hormone receptor family. NR1 subfamily. Binds DNA as a monomer or a homodimer. Interacts with C1D, NR2E3 and SP1. Interacts with OPHN1 (via C-terminus). Interacts with ZNHIT1. Interacts with PER2; the interaction associates PER2 to BMAL1 promoter region. Interacts with CRY1. Interacts with CCAR2. Interacts with SIAH2. Interacts with CDK1. Interacts with FBXW7. Interacts with HUWE1. Interacts with NR0B2. Interacts with NFIL3. Interacts (via domain NR LBD) with HSP90AA1 and HSP90AB1. Post-translationally, ubiquitinated, leading to its proteasomal degradation. Ubiquitinated by SIAH2; leading to its proteasomal degradation. Ubiquitinated by the SCF(FBXW7) complex when phosphorylated by CDK1 leading to its proteasomal degradation. Rapidly ubiquitinated in response to inflammatory triggers and sumoylation is a prerequisite to its ubiquitination. Sumoylated by UBE2I, desumoylated by SENP1, and sumoylation is a prerequisite to its ubiquitination. In terms of processing, phosphorylated by CSNK1E; phosphorylation enhances its cytoplasmic localization. Post-translationally, undergoes lysosome-mediated degradation in a time-dependent manner in the liver. In terms of tissue distribution, widely expressed. Expressed at high levels in the liver, adipose tissue, skeletal muscle and brain. Also expressed in endothelial cells (ECs), vascular smooth muscle cells (VSMCs) and macrophages. Expression oscillates diurnally in the suprachiasmatic nucleus (SCN) of the hypothalamus as well as in peripheral tissues. Expression increases during the differentiation of pre-adipocytes into mature adipocytes. Expressed at high levels in some squamous carcinoma cell lines.

The protein resides in the nucleus. The protein localises to the cytoplasm. It localises to the cell projection. It is found in the dendrite. Its subcellular location is the dendritic spine. Its function is as follows. Transcriptional repressor which coordinates circadian rhythm and metabolic pathways in a heme-dependent manner. Integral component of the complex transcription machinery that governs circadian rhythmicity and forms a critical negative limb of the circadian clock by directly repressing the expression of core clock components BMAL1, CLOCK and CRY1. Also regulates genes involved in metabolic functions, including lipid and bile acid metabolism, adipogenesis, gluconeogenesis and the macrophage inflammatory response. Acts as a receptor for heme which stimulates its interaction with the NCOR1/HDAC3 corepressor complex, enhancing transcriptional repression. Recognizes two classes of DNA response elements within the promoter of its target genes and can bind to DNA as either monomers or homodimers, depending on the nature of the response element. Binds as a monomer to a response element composed of the consensus half-site motif 5'-[A/G]GGTCA-3' preceded by an A/T-rich 5' sequence (RevRE), or as a homodimer to a direct repeat of the core motif spaced by two nucleotides (RevDR-2). Acts as a potent competitive repressor of ROR alpha (RORA) function and regulates the levels of its ligand heme by repressing the expression of PPARGC1A, a potent inducer of heme synthesis. Regulates lipid metabolism by repressing the expression of APOC3 and by influencing the activity of sterol response element binding proteins (SREBPs); represses INSIG2 which interferes with the proteolytic activation of SREBPs which in turn govern the rhythmic expression of enzymes with key functions in sterol and fatty acid synthesis. Regulates gluconeogenesis via repression of G6PC1 and PEPCK and adipocyte differentiation via repression of PPARG. Regulates glucagon release in pancreatic alpha-cells via the AMPK-NAMPT-SIRT1 pathway and the proliferation, glucose-induced insulin secretion and expression of key lipogenic genes in pancreatic-beta cells. Positively regulates bile acid synthesis by increasing hepatic expression of CYP7A1 via repression of NR0B2 and NFIL3 which are negative regulators of CYP7A1. Modulates skeletal muscle oxidative capacity by regulating mitochondrial biogenesis and autophagy; controls mitochondrial biogenesis and respiration by interfering with the STK11-PRKAA1/2-SIRT1-PPARGC1A signaling pathway. Represses the expression of SERPINE1/PAI1, an important modulator of cardiovascular disease and the expression of inflammatory cytokines and chemokines in macrophages. Represses gene expression at a distance in macrophages by inhibiting the transcription of enhancer-derived RNAs (eRNAs). Plays a role in the circadian regulation of body temperature and negatively regulates thermogenic transcriptional programs in brown adipose tissue (BAT); imposes a circadian oscillation in BAT activity, increasing body temperature when awake and depressing thermogenesis during sleep. In concert with NR2E3, regulates transcriptional networks critical for photoreceptor development and function. In addition to its activity as a repressor, can also act as a transcriptional activator. In the ovarian granulosa cells acts as a transcriptional activator of STAR which plays a role in steroid biosynthesis. In collaboration with SP1, activates GJA1 transcription in a heme-independent manner. Represses the transcription of CYP2B10, CYP4A10 and CYP4A14. Represses the transcription of CES2. Represses and regulates the circadian expression of TSHB in a NCOR1-dependent manner. Negatively regulates the protein stability of NR3C1 and influences the time-dependent subcellular distribution of NR3C1, thereby affecting its transcriptional regulatory activity. Plays a critical role in the circadian control of neutrophilic inflammation in the lung; under resting, non-stress conditions, acts as a rhythmic repressor to limit inflammatory activity whereas in the presence of inflammatory triggers undergoes ubiquitin-mediated degradation thereby relieving inhibition of the inflammatory response. Plays a key role in the circadian regulation of microglial activation and neuroinflammation; suppresses microglial activation through the NF-kappaB pathway in the central nervous system. Plays a role in the regulation of the diurnal rhythms of lipid and protein metabolism in the skeletal muscle via transcriptional repression of genes controlling lipid and amino acid metabolism in the muscle. In Homo sapiens (Human), this protein is Nuclear receptor subfamily 1 group D member 1 (NR1D1).